The sequence spans 225 residues: DnaA regulatory inactivator Hda (225 aa).

The protein belongs to the DnaA family. HdA subfamily. As to quaternary structure, the active form seems to be an ADP-bound monomer. Forms the RIDA complex (regulatory inactivation of DnaA) of ATP-DnaA, ADP-Hda and the DNA-loaded beta sliding clamp (dnaN).

Its function is as follows. Mediates the interaction of DNA replication initiator protein DnaA with DNA polymerase subunit beta sliding clamp (dnaN). Stimulates hydrolysis of ATP-DnaA to ADP-DnaA, rendering DnaA inactive for reinitiation, a process called regulatory inhibition of DnaA or RIDA. The chain is DnaA regulatory inactivator Hda from Klebsiella pneumoniae (strain 342).